Consider the following 1068-residue polypeptide: MEQQQSKNNAHVSKLFVCTAVDCKDDIEEKFERSFLTLQMQISGLSDKEMHDMLSQAVCKEKQHEDISIGFLYIMLTDPSMASKTYRDVTLVSRDGMNGIVTNLTFLVAEKYTKLTEVARRQLIWLLREFVKHQVLSVENVIWNCLRQAGGGDVSSRNLFLIESLLDIFIEFRTWLESNPFLVQSTVYSFVRLIEDHANPALLSLRQKEVKFTISLIRERFHDIIPLGRDFVRLLQNVARIPEFEQLWRDILFNPKMLHQTFNGIWQLLHIRTSRRFLQCRLLPEMERKISFLASSVKFGNQKRYQDWFQDKYFATPESHSLRSDLIRFIINVIHPTNDMLCSDIIPRWAIIGWLISSCTNPIASANAKLSLFYDWLFFDPAKDNIMNIEPGILVMYHSIRNHPFVSSTLLDFLCRITKNFFVKHEDKIRIGVYNSLKLILEKQVIPNLQPLFESPKLDRELRNLIRDNFREFLSPPANLGQLLYTSLHPVQGHILKIESDQRILHCENVDLHETGLINISGTVDEDKKISLVPTDQEIESVFSGETAENLRRVHNIEDNTDDDDDLPLSEVRLKEKPKVELAEAIAESFDAFVTKRNSYTWEAFLKDFRPLPASAFEEFQLNYVISNTVLILRETLPQQNIFSESKTEEKHLAKSISYPLYGLFRFLYENDEKSKKPFQTLLSEICEGIPEIGYLLLYFMKIYCKLQTRKNSQQSYQFKTTIYRQICDAADEKIGHCLLRDLDLLEKENTNIFLWLLPDIYREFKSIATNNTDILRITLRCIDAKNVRDILYSVAQGKLTIFKQDGLIDCIRQSLEFETYEQFCLWQIVQAHDVPLRCIQDILPELEAGSHPEALSHFLLLLKNEEPTNEIIRLMLSRESKSKGDPFVTSVLRFWCQRYEEKLSEIIASLLTSKYPSSSPNKRKRPPKGISVSTSTPSADQVLNHLEHYRRSCRHGTGTGLYVHDMMQRALQSAYSHSNDSTKKQFCDLFALAAEEDTTVGRRGGSGRGRKQPGSKKDVNNHGTSKKNAEMVKTIYSSDDNSSEEDWSKSKILQTAKRRKKANNDSD.

Disordered stretches follow at residues 916-939 (YPSSSPNKRKRPPKGISVSTSTPS) and 1001-1068 (VGRR…NDSD). Residues serine 1038, serine 1039, serine 1043, and serine 1044 each carry the phosphoserine modification.

This sequence belongs to the Integrator subunit 3 family. As to quaternary structure, belongs to the multiprotein complex Integrator, at least composed of IntS1, IntS2, IntS3, IntS4, omd/IntS5, IntS6, defl/IntS7, IntS8, IntS9, IntS10, IntS11, IntS12, asun/IntS13, IntS14 and IntS15. The core complex associates with protein phosphatase 2A subunits mts/PP2A and Pp2A-29B, to form the Integrator-PP2A (INTAC) complex.

It localises to the nucleus. It is found in the cytoplasm. Functionally, component of the integrator complex, a multiprotein complex that terminates RNA polymerase II (Pol II) transcription in the promoter-proximal region of genes. The integrator complex provides a quality checkpoint during transcription elongation by driving premature transcription termination of transcripts that are unfavorably configured for transcriptional elongation: the complex terminates transcription by (1) catalyzing dephosphorylation of the C-terminal domain (CTD) of Pol II subunit Polr2A/Rbp1 and Spt5, and (2) degrading the exiting nascent RNA transcript via endonuclease activity. The integrator complex is also involved in the 3'-end processing of the U7 snRNA, and also the spliceosomal snRNAs U1, U2, U4 and U5. In Drosophila sechellia (Fruit fly), this protein is Integrator complex subunit 3 homolog (IntS3).